The sequence spans 223 residues: Holliday junction branch migration complex subunit RuvA (223 aa).

Residues 1–64 are domain I; sequence MIGRIAGVIL…EDLLQLFGFP (64 aa). The tract at residues 65-143 is domain II; sequence TLLEKEWHRL…AVMALGGALT (79 aa). Positions 144–169 are flexible linker; the sequence is VDPGPLPEVELVEAAVPAPVPAKAAP. Positions 170–223 are domain III; that stretch reads SSAQATADALSALGNLGYAPSEAASAVAEAAAREPAAPTAALIRAALRLLAPKE.

Belongs to the RuvA family. Homotetramer. Forms an RuvA(8)-RuvB(12)-Holliday junction (HJ) complex. HJ DNA is sandwiched between 2 RuvA tetramers; dsDNA enters through RuvA and exits via RuvB. An RuvB hexamer assembles on each DNA strand where it exits the tetramer. Each RuvB hexamer is contacted by two RuvA subunits (via domain III) on 2 adjacent RuvB subunits; this complex drives branch migration. In the full resolvosome a probable DNA-RuvA(4)-RuvB(12)-RuvC(2) complex forms which resolves the HJ.

Its subcellular location is the cytoplasm. Functionally, the RuvA-RuvB-RuvC complex processes Holliday junction (HJ) DNA during genetic recombination and DNA repair, while the RuvA-RuvB complex plays an important role in the rescue of blocked DNA replication forks via replication fork reversal (RFR). RuvA specifically binds to HJ cruciform DNA, conferring on it an open structure. The RuvB hexamer acts as an ATP-dependent pump, pulling dsDNA into and through the RuvAB complex. HJ branch migration allows RuvC to scan DNA until it finds its consensus sequence, where it cleaves and resolves the cruciform DNA. This is Holliday junction branch migration complex subunit RuvA from Paracoccus denitrificans (strain Pd 1222).